Reading from the N-terminus, the 511-residue chain is Synaptotagmin-6 (511 aa).

The Vesicular segment spans residues M1–S59. Residues C12–R38 form a cysteine motif region. Residues L60 to F80 form a helical membrane-spanning segment. The Cytoplasmic portion of the chain corresponds to W81–L511. Disordered stretches follow at residues E92–L119 and T157–Q182. The segment covering S94–S103 has biased composition (low complexity). Polar residues-rich tracts occupy residues E104–G113 and Q160–H172. A Phosphoserine modification is found at S217. C2 domains are found at residues S230 to K351 and D362 to H495. Ca(2+) contacts are provided by D261, D267, D319, F320, D321, S324, D327, D393, D399, D453, and D455. A necessary for cell membrane association (isoform 2) region spans residues M483–L511.

It belongs to the synaptotagmin family. As to quaternary structure, isoform 1: Homodimer; disulfide-linked via the cysteine motif. Isoform 1: Can also form heterodimers with SYT3, SYT7, SYT9 and SYT10. Isoform 1: Interacts with STX1A, STX1B and STX2; the interaction is Ca(2+)-dependent. Isoform 2: Is not able to form homodimer and heterodimers. The cofactor is Ca(2+). In terms of tissue distribution, isoform 1 is expressed in the olfactory bulb. Isoform 2 is expressed in the brain (at protein level).

Its subcellular location is the cytoplasmic vesicle. The protein resides in the secretory vesicle. It localises to the synaptic vesicle membrane. It is found in the membrane. The protein localises to the cytoplasm. Its subcellular location is the cytosol. The protein resides in the cell membrane. In terms of biological role, may be involved in Ca(2+)-dependent exocytosis of secretory vesicles through Ca(2+) and phospholipid binding to the C2 domain or may serve as Ca(2+) sensors in the process of vesicular trafficking and exocytosis. May mediate Ca(2+)-regulation of exocytosis in acrosomal reaction in sperm. In Mus musculus (Mouse), this protein is Synaptotagmin-6 (Syt6).